Consider the following 368-residue polypeptide: Peptidoglycan-recognition protein LA (368 aa).

Residues 1 to 127 lie on the Cytoplasmic side of the membrane; the sequence is MFEENNSPTT…KSPSRRVTRN (127 aa). Disordered stretches follow at residues 21–46 and 101–122; these read QRAS…GLPL and INSN…SPSR. Composition is skewed to low complexity over residues 33–43 and 102–113; these read TSAGSSTSSSG and NSNNANGNGNAN. Residues 128-148 form a helical membrane-spanning segment; that stretch reads TILLITLILLVLATGLIVLYV. Topologically, residues 149 to 368 are extracellular; the sequence is ELNRPKPELP…MKTESWDAKQ (220 aa). A disulfide bridge links Cys221 with Cys227. Residues 233–320 form the N-acetylmuramoyl-L-alanine amidase domain; it reads TIQDSAIAEK…DVDYKLVAQN (88 aa). N-linked (GlcNAc...) asparagine glycosylation is found at Asn273 and Asn320.

The protein belongs to the N-acetylmuramoyl-L-alanine amidase 2 family. Expressed in uninduced hemocytes and mbn-2 cells.

It is found in the cell membrane. In terms of biological role, peptidoglycan-recognition protein probably involved in innate immunity by binding to peptidoglycans (PGN) of bacteria and activating the immune response. The polypeptide is Peptidoglycan-recognition protein LA (PGRP-LA) (Drosophila melanogaster (Fruit fly)).